We begin with the raw amino-acid sequence, 185 residues long: Ribosome-recycling factor (185 aa).

A disordered region spans residues 137–158 (DELKKLEKDHTASEDEVKRAQD).

Belongs to the RRF family.

Its subcellular location is the cytoplasm. In terms of biological role, responsible for the release of ribosomes from messenger RNA at the termination of protein biosynthesis. May increase the efficiency of translation by recycling ribosomes from one round of translation to another. The sequence is that of Ribosome-recycling factor from Desulfitobacterium hafniense (strain Y51).